The sequence spans 98 residues: Protein E7 (98 aa).

An E7 terminal domain region spans residues 1–40 (MHGDTPTLHEYMLDLQPETTDLYCYEQLNDSSEEEDEIDG). Residues 22-26 (LYCYE) carry the LXCXE motif; interaction with host RB1 and TMEM173/STING motif. A zinc finger spans residues 58–94 (CCKCDSTLRLCVQSTHVDIRTLEDLLMGTLGIVCPIC). Residues 76 to 84 (IRTLEDLLM) carry the Nuclear export signal motif.

Belongs to the papillomaviridae E7 protein family. As to quaternary structure, homodimer. Homooligomer. Interacts with host RB1; this interaction induces dissociation of RB1-E2F1 complex thereby disrupting RB1 activity. Interacts with host EP300; this interaction represses EP300 transcriptional activity. Forms a complex with CHD4 and HDAC1, thereby altering the action of host histone deacetylation. A similar complex involving E7, CHD4 and HDAC2 may also form. Interacts with protein E2; this interaction inhibits E7 oncogenic activity. Post-translationally, highly phosphorylated.

The protein resides in the host cytoplasm. Its subcellular location is the host nucleus. Its function is as follows. Plays a role in viral genome replication by driving entry of quiescent cells into the cell cycle. Stimulation of progression from G1 to S phase allows the virus to efficiently use the cellular DNA replicating machinery to achieve viral genome replication. E7 protein has both transforming and trans-activating activities. Induces the disassembly of the E2F1 transcription factor from RB1, with subsequent transcriptional activation of E2F1-regulated S-phase genes. Interferes with host histone deacetylation mediated by HDAC1 and HDAC2, leading to transcription activation. Also plays a role in the inhibition of both antiviral and antiproliferative functions of host interferon alpha. Interaction with host TMEM173/STING impairs the ability of TMEM173/STING to sense cytosolic DNA and promote the production of type I interferon (IFN-alpha and IFN-beta). The sequence is that of Protein E7 from Human papillomavirus type 16.